Consider the following 447-residue polypeptide: Acyl-CoA (8-3)-desaturase (447 aa).

Methionine 1 is subject to N-acetylmethionine. Residues 1 to 124 (MAPDPVPTPG…FRELRATVER (124 aa)) lie on the Cytoplasmic side of the membrane. The Cytochrome b5 heme-binding domain maps to 19 to 97 (TRYFTWEEVA…MNSLLIGELA (79 aa)). Residues 125 to 145 (MGLMKANHLFFLVYLLHILLL) traverse the membrane as a helical segment. Over 146 to 160 (DVAAWLTLWIFGTSL) the chain is Lumenal. A helical transmembrane segment spans residues 161–180 (VPFILCAVLLSTVQAQAGWL). Residues 181 to 268 (QHDFGHLSVF…HMPYNHQHKY (88 aa)) are Cytoplasmic-facing. The Histidine box-1 signature appears at 182–186 (HDFGH). The short motif at 219–223 (HFQHH) is the Histidine box-2 element. The helical transmembrane segment at 269 to 289 (FFLIGPPALLPLYFQWYIFYF) threads the bilayer. Residues 290–308 (VVQRKKWVDLAWMLSFYAR) lie on the Lumenal side of the membrane. The helical transmembrane segment at 309 to 329 (IFFTYMPLLGLKGFLGLFFIV) threads the bilayer. Over 330 to 447 (RFLESNWFVW…QLWLDAYLHQ (118 aa)) the chain is Cytoplasmic. A Histidine box-3 motif is present at residues 385-389 (QIEHH).

This sequence belongs to the fatty acid desaturase type 1 family. In terms of tissue distribution, highly expressed in the adrenal gland, liver, brain, and testis, tissues where lipogenesis and steroidogenesis are active. Expressed in colonic mucosa.

It is found in the endoplasmic reticulum membrane. Its subcellular location is the mitochondrion. The enzyme catalyses (8Z,11Z,14Z)-eicosatrienoyl-CoA + 2 Fe(II)-[cytochrome b5] + O2 + 2 H(+) = (5Z,8Z,11Z,14Z)-eicosatetraenoyl-CoA + 2 Fe(III)-[cytochrome b5] + 2 H2O. It carries out the reaction (8Z,11Z,14Z,17Z)-eicosatetraenoyl-CoA + 2 Fe(II)-[cytochrome b5] + O2 + 2 H(+) = (5Z,8Z,11Z,14Z,17Z)-eicosapentaenoyl-CoA + 2 Fe(III)-[cytochrome b5] + 2 H2O. It catalyses the reaction (11E)-octadecenoyl-CoA + 2 Fe(II)-[cytochrome b5] + O2 + 2 H(+) = (5Z,11E)-octadecadienoyl-CoA + 2 Fe(III)-[cytochrome b5] + 2 H2O. Its pathway is lipid metabolism; polyunsaturated fatty acid biosynthesis. Acts as a front-end fatty acyl-coenzyme A (CoA) desaturase that introduces a cis double bond at carbon 5 located between a preexisting double bond and the carboxyl end of the fatty acyl chain. Involved in biosynthesis of highly unsaturated fatty acids (HUFA) from the essential polyunsaturated fatty acids (PUFA) linoleic acid (LA) (18:2n-6) and alpha-linolenic acid (ALA) (18:3n-3) precursors. Specifically, desaturates dihomo-gamma-linoleoate (DGLA) (20:3n-6) and eicosatetraenoate (ETA) (20:4n-3) to generate arachidonate (AA) (20:4n-6) and eicosapentaenoate (EPA) (20:5n-3), respectively. As a rate limiting enzyme for DGLA (20:3n-6) and AA (20:4n-6)-derived eicosanoid biosynthesis, controls the metabolism of inflammatory lipids like prostaglandin E2, critical for efficient acute inflammatory response and maintenance of epithelium homeostasis. Contributes to membrane phospholipid biosynthesis by providing AA (20:4n-6) as a major acyl chain esterified into phospholipids. In particular, regulates phosphatidylinositol-4,5-bisphosphate levels, modulating inflammatory cytokine production in T-cells. Also desaturates (11E)-octadecenoate (trans-vaccenoate)(18:1n-9), a metabolite in the biohydrogenation pathway of LA (18:2n-6). The chain is Acyl-CoA (8-3)-desaturase from Mus musculus (Mouse).